The following is a 244-amino-acid chain: MTRVLLLGGTAEGRALAKELHPHVEIVSSLAGRVPNPALPIGPVRIGGFGGVEGLRGWLREERIDAVVDATHPFAVTITAHAAQVCGELGLPYLVLARPPWDPGTAIIAVSDIEAADVVAEQGYSRVFLTTGRSGIAAFANSDAWFLIRVVTAPDGTALPRRHKLVLSRGPYGYHDEFALLREQRIDALVTKNSGGKMTRAKLDAAAALGISVVMIARPLLPAGVAAVDSVHRAAMWVAGLPSR.

The protein belongs to the precorrin-6x reductase family.

It catalyses the reaction precorrin-6B + NADP(+) = precorrin-6A + NADPH + 2 H(+). Its pathway is cofactor biosynthesis; adenosylcobalamin biosynthesis; cob(II)yrinate a,c-diamide from precorrin-2 (aerobic route): step 6/10. In terms of biological role, catalyzes the reduction of the macrocycle of precorrin-6X into precorrin-6Y. The chain is Precorrin-6A reductase (cobK) from Mycobacterium tuberculosis (strain CDC 1551 / Oshkosh).